We begin with the raw amino-acid sequence, 912 residues long: Protein translocase subunit SecA (912 aa).

ATP is bound by residues Q87, 105 to 109 (GEGKT), and D508. The segment at 865–912 (DEEAAQVQSGNAPLPVSQVTRDEPKVGRNDPCPCGSGKKYKHCHGQLS) is disordered. Zn(2+) contacts are provided by C896, C898, C907, and H908. Residues 902–912 (KKYKHCHGQLS) are compositionally biased toward basic residues.

The protein belongs to the SecA family. As to quaternary structure, monomer and homodimer. Part of the essential Sec protein translocation apparatus which comprises SecA, SecYEG and auxiliary proteins SecDF-YajC and YidC. Zn(2+) is required as a cofactor.

It is found in the cell inner membrane. The protein localises to the cytoplasm. It catalyses the reaction ATP + H2O + cellular proteinSide 1 = ADP + phosphate + cellular proteinSide 2.. Its function is as follows. Part of the Sec protein translocase complex. Interacts with the SecYEG preprotein conducting channel. Has a central role in coupling the hydrolysis of ATP to the transfer of proteins into and across the cell membrane, serving both as a receptor for the preprotein-SecB complex and as an ATP-driven molecular motor driving the stepwise translocation of polypeptide chains across the membrane. The chain is Protein translocase subunit SecA from Xanthomonas oryzae pv. oryzae (strain PXO99A).